Here is a 173-residue protein sequence, read N- to C-terminus: Large ribosomal subunit protein uL5 (173 aa).

It belongs to the universal ribosomal protein uL5 family. In terms of assembly, component of the large ribosomal subunit.

It localises to the nucleus. The protein resides in the cytoplasm. In terms of biological role, component of the ribosome, a large ribonucleoprotein complex responsible for the synthesis of proteins in the cell. The small ribosomal subunit (SSU) binds messenger RNAs (mRNAs) and translates the encoded message by selecting cognate aminoacyl-transfer RNA (tRNA) molecules. The large subunit (LSU) contains the ribosomal catalytic site termed the peptidyl transferase center (PTC), which catalyzes the formation of peptide bonds, thereby polymerizing the amino acids delivered by tRNAs into a polypeptide chain. The nascent polypeptides leave the ribosome through a tunnel in the LSU and interact with protein factors that function in enzymatic processing, targeting, and the membrane insertion of nascent chains at the exit of the ribosomal tunnel. This is Large ribosomal subunit protein uL5 (RPL11) from Encephalitozoon cuniculi (strain GB-M1) (Microsporidian parasite).